A 133-amino-acid polypeptide reads, in one-letter code: Snaclec purpureotin subunit alpha (133 aa).

Disulfide bonds link Cys-2–Cys-13, Cys-30–Cys-127, and Cys-102–Cys-119. Residues 9-128 enclose the C-type lectin domain; that stretch reads FKQYCYQIIK…CEQKHIFMCK (120 aa).

Belongs to the snaclec family. As to quaternary structure, homodimer (non-covalently linked) of heterodimer of alpha and beta subunits (disulfide-linked). Expressed by the venom gland.

The protein localises to the secreted. Snaclec that induces platelet aggregation without any cofactor in a dose-dependent manner. Its platelet aggregation effect is blocked by echicetin, suggesting it is a GPIb-binding protein which binds to the same or a closely related GPIb site on platelets as echicetin. The polypeptide is Snaclec purpureotin subunit alpha (Trimeresurus purpureomaculatus (Mangrove pit viper)).